The chain runs to 324 residues: tRNA-modifying protein YgfZ (324 aa).

Trp-186 lines the folate pocket.

It belongs to the tRNA-modifying YgfZ family.

The protein resides in the cytoplasm. In terms of biological role, folate-binding protein involved in regulating the level of ATP-DnaA and in the modification of some tRNAs. It is probably a key factor in regulatory networks that act via tRNA modification, such as initiation of chromosomal replication. The sequence is that of tRNA-modifying protein YgfZ from Colwellia psychrerythraea (strain 34H / ATCC BAA-681) (Vibrio psychroerythus).